A 106-amino-acid chain; its full sequence is PTS system N,N'-diacetylchitobiose-specific EIIB component (106 aa).

The PTS EIIB type-3 domain occupies 3 to 106 (KKHIYLFCSA…VAAIKKAAAN (104 aa)). Cysteine 10 acts as the Phosphocysteine intermediate in catalysis. At cysteine 10 the chain carries Phosphocysteine; by EIIA.

As to quaternary structure, forms a complex with ChbA (EIIA). ChbB is a monomer in both its unphosphorylated and phosphorylated forms.

The protein resides in the cytoplasm. The catalysed reaction is N,N'-diacetylchitobiose(out) + N(pros)-phospho-L-histidyl-[protein] = diacetylchitobiose-6'-phosphate(in) + L-histidyl-[protein]. Functionally, the phosphoenolpyruvate-dependent sugar phosphotransferase system (sugar PTS), a major carbohydrate active transport system, catalyzes the phosphorylation of incoming sugar substrates concomitantly with their translocation across the cell membrane. The enzyme II ChbABC PTS system is involved in the transport of the chitin disaccharide N,N'-diacetylchitobiose (GlcNAc2). The chain is PTS system N,N'-diacetylchitobiose-specific EIIB component (chbB) from Escherichia coli O157:H7.